We begin with the raw amino-acid sequence, 330 residues long: Aspartate--ammonia ligase (330 aa).

The protein belongs to the class-II aminoacyl-tRNA synthetase family. AsnA subfamily.

Its subcellular location is the cytoplasm. It catalyses the reaction L-aspartate + NH4(+) + ATP = L-asparagine + AMP + diphosphate + H(+). Its pathway is amino-acid biosynthesis; L-asparagine biosynthesis; L-asparagine from L-aspartate (ammonia route): step 1/1. The protein is Aspartate--ammonia ligase of Yersinia pseudotuberculosis serotype O:1b (strain IP 31758).